Reading from the N-terminus, the 181-residue chain is Histone deacetylase complex subunit SAP30L (181 aa).

The segment at Cys-26 to His-74 adopts an Atypical zinc-finger fold. The tract at residues Arg-82–Val-103 is disordered. The Nuclear localization signal (NLS) motif lies at Asn-83–Lys-88. Residues Arg-85–Arg-87 are important for DNA and phosphoinositide binding.

Belongs to the SAP30 family. Interacts with components of the histone deacetylase complex sin3a, hdac1 and hdac2. Binds histones and nucleosomes.

Its subcellular location is the nucleus. It is found in the nucleolus. Functionally, functions as a transcription repressor, probably via its interaction with histone deacetylase complexes. Involved in the functional recruitment of the class 1 Sin3-histone deacetylase complex (HDAC) to the nucleolus. Binds DNA, apparently without sequence-specificity, and bends bound double-stranded DNA. Binds phosphoinositol phosphates (phosphoinositol 3-phosphate, phosphoinositol 4-phosphate and phosphoinositol 5-phosphate) via the same basic sequence motif that mediates DNA binding and nuclear import. This Xenopus tropicalis (Western clawed frog) protein is Histone deacetylase complex subunit SAP30L (sap30l).